The sequence spans 500 residues: Allene oxide synthase 3 (500 aa).

The interval 1–26 is disordered; the sequence is MAPPPVNSGDAAAAATGEKSKLSPSG. Residues 297–298, Lys-304, and 365–368 contribute to the substrate site; these read FN and PVEF. Cys-452 provides a ligand contact to heme.

It belongs to the cytochrome P450 family. It depends on heme as a cofactor. In terms of tissue distribution, not expressed in dark-grown seedlings.

The catalysed reaction is (13S)-hydroperoxy-(9Z,11E,15Z)-octadecatrienoate = (9Z,13S,15Z)-12,13-epoxyoctadeca-9,11,15-trienoate + H2O. Its pathway is lipid metabolism; oxylipin biosynthesis. Functionally, involved in the biosynthesis of jasmonic acid, a growth regulator that is implicated also as a signaling molecule in plant defense. Converts 13-hydroperoxylinolenic acid to 12,13-epoxylinolenic acid. The polypeptide is Allene oxide synthase 3 (CYP74A3) (Oryza sativa subsp. japonica (Rice)).